The sequence spans 182 residues: Plasmolipin (182 aa).

Residues 1–35 (MAEFPSKVSTRTSSPAQGAEASVSALRPDLGFVRS) are Cytoplasmic-facing. The residue at position 9 (S9) is a Phosphoserine. Residues 32–166 (FVRSRLGALM…SAFFSYQAWR (135 aa)) form the MARVEL domain. A helical transmembrane segment spans residues 36 to 56 (RLGALMLLQLVLGLLVWALIA). Over 57 to 68 (DTPYHLYPAYGW) the chain is Extracellular. A helical transmembrane segment spans residues 69–89 (VMFVAVFLWLVTIVLFNLYLF). Topologically, residues 90 to 99 (QLHMKLYMVP) are cytoplasmic. Residues 100–120 (WPLVLMIFNISATVLYITAFI) traverse the membrane as a helical segment. At 121-141 (ACSAAVDLTSLRGTRPYNQRA) the chain is on the extracellular side. Residues 142–162 (AASFFACLVMIAYGVSAFFSY) form a helical membrane-spanning segment. Over 163-182 (QAWRGVGSNAATSQMAGGYA) the chain is Cytoplasmic.

Belongs to the MAL family. Forms oligomers. Phosphorylated.

The protein resides in the cell membrane. The protein localises to the myelin membrane. It is found in the apical cell membrane. Its subcellular location is the golgi apparatus. Its function is as follows. Main component of the myelin sheath that plays an important role in myelin membrane biogenesis and myelination. Plays an essential function in apical endocytosis. Regulates epithelial development through the regulation of apical endocytosis. Part of the intracellular machinery that mediates basolateral-to-apical transport of ICAM-1, an essential adhesion receptor in epithelial cells, from the subapical compartment in hepatic epithelial cells. The chain is Plasmolipin from Homo sapiens (Human).